Reading from the N-terminus, the 436-residue chain is Citrate synthase (436 aa).

Residues His311 and Asp370 contribute to the active site.

Belongs to the citrate synthase family. In terms of assembly, homohexamer.

The catalysed reaction is oxaloacetate + acetyl-CoA + H2O = citrate + CoA + H(+). The protein operates within carbohydrate metabolism; tricarboxylic acid cycle; isocitrate from oxaloacetate: step 1/2. With respect to regulation, allosterically inhibited by NADH. This Rickettsia prowazekii (strain Madrid E) protein is Citrate synthase (gltA).